We begin with the raw amino-acid sequence, 497 residues long: Squalene monooxygenase (497 aa).

FAD is bound by residues valine 29–valine 30, glutamate 49–arginine 50, arginine 57, arginine 159, valine 175, aspartate 336, and methionine 349. The next 2 helical transmembrane spans lie at phenylalanine 434–leucine 454 and leucine 467–phenylalanine 487.

The protein belongs to the squalene monooxygenase family. Requires FAD as cofactor.

The protein localises to the microsome membrane. The protein resides in the endoplasmic reticulum membrane. The catalysed reaction is squalene + reduced [NADPH--hemoprotein reductase] + O2 = (S)-2,3-epoxysqualene + oxidized [NADPH--hemoprotein reductase] + H2O + H(+). It functions in the pathway terpene metabolism; lanosterol biosynthesis; lanosterol from farnesyl diphosphate: step 2/3. In terms of biological role, catalyzes the stereospecific oxidation of squalene to (S)-2,3-epoxysqualene, and is considered to be a rate-limiting enzyme in steroid biosynthesis. In Eremothecium gossypii (strain ATCC 10895 / CBS 109.51 / FGSC 9923 / NRRL Y-1056) (Yeast), this protein is Squalene monooxygenase (ERG1).